A 323-amino-acid polypeptide reads, in one-letter code: EKNKIRPRGQRDSSYYWKMEASEVMLSTRIGSGSFGTVYKGKWHGDVAVKILKVVDPTPEQLQAFRNEVAVLRKTRHVNILLFMGYMTKDNLAIVTQWCEGSSLYKHLHVQETKFQMFQLIDIARQTAQGMDYLHAKNIIHRDMKSNNIFLHEGLTVKIGDFGLATVKSRWSGSQQVEQPTGSVLWMAPEVIRMQDDNPFSFQSDVYSYGIVLYELMAGELPYAHINNRDQIIFMVGRGYASPDLSRLYKNCPKAIKRLVADCVKKVKEERPLFPQILSSIELLQHSLPKINRSAPEPSLHRAAHTEDINACTLTTSPRLPVF.

Positions 24–284 (VMLSTRIGSG…PQILSSIELL (261 aa)) constitute a Protein kinase domain. ATP is bound by residues 30 to 38 (IGSGSFGTV) and Lys-50. The active-site Proton acceptor is the Asp-143.

The protein belongs to the protein kinase superfamily. TKL Ser/Thr protein kinase family. RAF subfamily.

It catalyses the reaction L-seryl-[protein] + ATP = O-phospho-L-seryl-[protein] + ADP + H(+). It carries out the reaction L-threonyl-[protein] + ATP = O-phospho-L-threonyl-[protein] + ADP + H(+). This chain is Serine/threonine-protein kinase-transforming protein raf (V-RAF), found in Murine sarcoma virus 3611.